Here is a 569-residue protein sequence, read N- to C-terminus: Endonuclease/exonuclease/phosphatase family domain-containing protein 1 (569 aa).

Glycine 2 is lipidated: N-myristoyl glycine. 2 positions are modified to phosphoserine: serine 16 and serine 25. The region spanning 38-67 is the HhH domain; the sequence is ERLNINTATEEELMTLPGVTRAVARSIVEY. Phosphoserine occurs at positions 106, 110, 160, and 173. Residues 200–224 are disordered; that stretch reads SRPPSTHTNGGLTFTAKPHPSPTSL. Residues 202 to 211 are compositionally biased toward polar residues; the sequence is PPSTHTNGGL. Threonine 265 carries the phosphothreonine modification. The segment at 549–569 is disordered; sequence VPRNGNGVTLEPSEANIKHER.

This Mus musculus (Mouse) protein is Endonuclease/exonuclease/phosphatase family domain-containing protein 1 (Eepd1).